The sequence spans 180 residues: CASP-like protein 2D1 (180 aa).

Residues 1-7 lie on the Cytoplasmic side of the membrane; that stretch reads MAASGLK. Residues 8–28 form a helical membrane-spanning segment; sequence VPEMALRVCVVPLALASLWEM. Residues 29-48 lie on the Extracellular side of the membrane; it reads ATNAQADDTYGEVKFSDLSG. A helical membrane pass occupies residues 49–69; that stretch reads FSYLVGVNAVTAAYALVSILL. The Cytoplasmic segment spans residues 70-79; it reads SSLKPLARYD. The chain crosses the membrane as a helical span at residues 80–100; that stretch reads WVILVMDQASAYLLVTSASAA. Residues 101–129 lie on the Extracellular side of the membrane; the sequence is AELLQLARRGDREVSWGEVCSYFGRFCGK. A helical membrane pass occupies residues 130–150; that stretch reads ATVSLALHAAALACFVALALV. At 151 to 180 the chain is on the cytoplasmic side; it reads SAFRVLSTTGSSCHPPKHAQAQEHEQGRYN. The interval 161–180 is disordered; it reads SSCHPPKHAQAQEHEQGRYN. The segment covering 170–180 has biased composition (basic and acidic residues); it reads QAQEHEQGRYN.

It belongs to the Casparian strip membrane proteins (CASP) family. Homodimer and heterodimers.

Its subcellular location is the cell membrane. The sequence is that of CASP-like protein 2D1 from Sorghum bicolor (Sorghum).